The sequence spans 231 residues: Probable amino-acid ABC transporter permease protein y4tG (231 aa).

Helical transmembrane passes span 9-29 (TGNGELAFAISILPMLLMGLI), 32-52 (LQAAFLGFFVACVLGMVFAVL), 64-84 (AAVLIEFIRDTPLIAQLFFLY), 86-106 (VLPEYGIIFPAFLTGALALGI), 161-181 (YLVSIMKDVPVLSVVTIVEML), and 196-216 (VPLSMVGGIYLILTIVASALV). The ABC transmembrane type-1 domain occupies 28–217 (LITTLQAAFL…LTIVASALVR (190 aa)).

The protein belongs to the binding-protein-dependent transport system permease family. HisMQ subfamily.

It localises to the cell inner membrane. Probably part of the binding-protein-dependent transport system y4tEFGH for an amino acid. Probably responsible for the translocation of the substrate across the membrane. This chain is Probable amino-acid ABC transporter permease protein y4tG, found in Sinorhizobium fredii (strain NBRC 101917 / NGR234).